The following is a 107-amino-acid chain: Age-related maculopathy susceptibility protein 2 (107 aa).

The segment at 1–21 is disordered; it reads MLRLYPGPMVTEAEGKGGPEM.

As to expression, detected in retina and placenta.

The protein localises to the cytoplasm. This Homo sapiens (Human) protein is Age-related maculopathy susceptibility protein 2 (ARMS2).